The chain runs to 517 residues: Maturase K (517 aa).

It belongs to the intron maturase 2 family. MatK subfamily.

Its subcellular location is the plastid. The protein localises to the chloroplast. In terms of biological role, usually encoded in the trnK tRNA gene intron. Probably assists in splicing its own and other chloroplast group II introns. The protein is Maturase K of Phalaenopsis japonica (Orchid).